A 32-amino-acid polypeptide reads, in one-letter code: Cytochrome b6-f complex subunit 7 (32 aa).

The helical transmembrane segment at 9–29 (AILSSVLVLVGLAVGFLLLKV) threads the bilayer.

The protein belongs to the PetM family. In terms of assembly, the 4 large subunits of the cytochrome b6-f complex are cytochrome b6, subunit IV (17 kDa polypeptide, PetD), cytochrome f and the Rieske protein, while the 4 small subunits are PetG, PetL, PetM and PetN. The complex functions as a dimer.

Its subcellular location is the plastid. The protein localises to the chloroplast thylakoid membrane. Functionally, component of the cytochrome b6-f complex, which mediates electron transfer between photosystem II (PSII) and photosystem I (PSI), cyclic electron flow around PSI, and state transitions. In Porphyra purpurea (Red seaweed), this protein is Cytochrome b6-f complex subunit 7.